Consider the following 123-residue polypeptide: uncharacterized protein (123 aa).

The stretch at 36 to 76 forms a coiled coil; it reads VDRQENKKEFLSAEEAREKFKELINQVRSWKEQMSTLSKYA.

This is an uncharacterized protein from Aquifex aeolicus (strain VF5).